Consider the following 107-residue polypeptide: Small ribosomal subunit protein bS18c (107 aa).

A compositionally biased stretch (basic residues) spans 85–95 (KKAQRFKRRQS). A disordered region spans residues 85–107 (KKAQRFKRRQSTARTVGLRTRNK).

Belongs to the bacterial ribosomal protein bS18 family. Part of the 30S ribosomal subunit.

It localises to the plastid. Its subcellular location is the chloroplast. This is Small ribosomal subunit protein bS18c from Oenothera argillicola (Appalachian evening primrose).